Reading from the N-terminus, the 66-residue chain is Large ribosomal subunit protein bL33c (66 aa).

Belongs to the bacterial ribosomal protein bL33 family.

The protein resides in the plastid. The protein localises to the chloroplast. The protein is Large ribosomal subunit protein bL33c of Daucus carota (Wild carrot).